Here is a 220-residue protein sequence, read N- to C-terminus: Fructose-6-phosphate aldolase 1 (220 aa).

Residue lysine 85 is the Schiff-base intermediate with substrate of the active site.

It belongs to the transaldolase family. Type 3A subfamily. As to quaternary structure, homodecamer.

Its subcellular location is the cytoplasm. The enzyme catalyses beta-D-fructose 6-phosphate = dihydroxyacetone + D-glyceraldehyde 3-phosphate. In terms of biological role, catalyzes the reversible formation of fructose 6-phosphate from dihydroxyacetone and D-glyceraldehyde 3-phosphate via an aldolization reaction. The polypeptide is Fructose-6-phosphate aldolase 1 (fsaA) (Escherichia coli O6:H1 (strain CFT073 / ATCC 700928 / UPEC)).